A 78-amino-acid polypeptide reads, in one-letter code: Large ribosomal subunit protein bL28 (78 aa).

The protein belongs to the bacterial ribosomal protein bL28 family.

This chain is Large ribosomal subunit protein bL28, found in Synechococcus sp. (strain CC9605).